Reading from the N-terminus, the 278-residue chain is uncharacterized protein (278 aa).

This is an uncharacterized protein from Escherichia coli (Bacteriophage T4).